A 39-amino-acid polypeptide reads, in one-letter code: Large ribosomal subunit protein bL36 (39 aa).

This sequence belongs to the bacterial ribosomal protein bL36 family.

This chain is Large ribosomal subunit protein bL36, found in Limosilactobacillus reuteri (strain DSM 20016) (Lactobacillus reuteri).